The chain runs to 734 residues: Serine protease FAM111B (734 aa).

Methionine 1 carries the post-translational modification N-acetylmethionine. Basic and acidic residues-rich tracts occupy residues 1 to 10 (MNSMKTEENK) and 17 to 32 (DDQR…TVMK). Positions 1–32 (MNSMKTEENKSFSAMEDDQRTRPEVSKDTVMK) are disordered. Residue lysine 284 forms a Glycyl lysine isopeptide (Lys-Gly) (interchain with G-Cter in SUMO2) linkage. The disordered stretch occupies residues 285–321 (QNESATDEINHQSLIQSKKKVHKPKKDGETKDVEHSR). Positions 310 to 321 (KDGETKDVEHSR) are enriched in basic and acidic residues. Residues histidine 490, aspartate 544, and serine 650 each act as charge relay system in the active site. Residues 712–734 (TYDEEKGKQESSLQDHQIEPMEC) form a disordered region.

This sequence belongs to the FAM111 family. As to expression, widely expressed.

Serine protease. In Homo sapiens (Human), this protein is Serine protease FAM111B.